Here is a 195-residue protein sequence, read N- to C-terminus: Elongation factor P (195 aa).

Belongs to the elongation factor P family.

The protein resides in the cytoplasm. It participates in protein biosynthesis; polypeptide chain elongation. Involved in peptide bond synthesis. Stimulates efficient translation and peptide-bond synthesis on native or reconstituted 70S ribosomes in vitro. Probably functions indirectly by altering the affinity of the ribosome for aminoacyl-tRNA, thus increasing their reactivity as acceptors for peptidyl transferase. The polypeptide is Elongation factor P (Rhodopirellula baltica (strain DSM 10527 / NCIMB 13988 / SH1)).